The primary structure comprises 204 residues: Small ribosomal subunit protein uS4 (204 aa).

A disordered region spans residues 22–43; the sequence is SGKELARRPYAPGDHGNTGRRP. Residues 94–154 form the S4 RNA-binding domain; it reads TRLDSVVFRL…ERSKKIVPIL (61 aa).

It belongs to the universal ribosomal protein uS4 family. As to quaternary structure, part of the 30S ribosomal subunit. Contacts protein S5. The interaction surface between S4 and S5 is involved in control of translational fidelity.

One of the primary rRNA binding proteins, it binds directly to 16S rRNA where it nucleates assembly of the body of the 30S subunit. Functionally, with S5 and S12 plays an important role in translational accuracy. The chain is Small ribosomal subunit protein uS4 from Oenococcus oeni (strain ATCC BAA-331 / PSU-1).